Here is a 354-residue protein sequence, read N- to C-terminus: Guanine nucleotide-binding protein subunit alpha-14 (354 aa).

Positions 33–354 (RELKLLLLGT…QLNLREFNLV (322 aa)) constitute a G-alpha domain. Residues 36-49 (KLLLLGTGESGKST) are G1 motif. GTP is bound by residues 41–48 (GTGESGKS), 175–181 (LRVRVPT), 200–204 (DVGGQ), 269–272 (NKKD), and Ala-326. Residues Ser-48 and Thr-181 each contribute to the Mg(2+) site. The segment at 173–181 (DVLRVRVPT) is G2 motif. The G3 motif stretch occupies residues 196 to 205 (FRMVDVGGQR). The segment at 265–272 (ILFLNKKD) is G4 motif. The G5 motif stretch occupies residues 324–329 (TCATDT).

It belongs to the G-alpha family. G(q) subfamily. As to quaternary structure, g proteins are composed of 3 units; alpha, beta and gamma. The alpha chain contains the guanine nucleotide binding site.

Functionally, guanine nucleotide-binding proteins (G proteins) are involved as modulators or transducers in various transmembrane signaling systems. Acts as an activator of phospholipase C. Mediates responses to trypsin. This chain is Guanine nucleotide-binding protein subunit alpha-14 (gna14), found in Xenopus laevis (African clawed frog).